The sequence spans 129 residues: Large ribosomal subunit protein uL22 (129 aa).

This sequence belongs to the universal ribosomal protein uL22 family. In terms of assembly, part of the 50S ribosomal subunit.

In terms of biological role, this protein binds specifically to 23S rRNA; its binding is stimulated by other ribosomal proteins, e.g. L4, L17, and L20. It is important during the early stages of 50S assembly. It makes multiple contacts with different domains of the 23S rRNA in the assembled 50S subunit and ribosome. The globular domain of the protein is located near the polypeptide exit tunnel on the outside of the subunit, while an extended beta-hairpin is found that lines the wall of the exit tunnel in the center of the 70S ribosome. In Sinorhizobium medicae (strain WSM419) (Ensifer medicae), this protein is Large ribosomal subunit protein uL22.